Here is a 332-residue protein sequence, read N- to C-terminus: 2,3-diketo-L-gulonate reductase (332 aa).

Residue histidine 44 is the Proton donor of the active site. NAD(+) contacts are provided by residues 168–174 (ITMVDMS), 224–225 (WK), and 304–306 (GHE).

This sequence belongs to the LDH2/MDH2 oxidoreductase family. DlgD subfamily. Homodimer.

It localises to the cytoplasm. It carries out the reaction 3-dehydro-L-gulonate + NAD(+) = 2,3-dioxo-L-gulonate + NADH + H(+). It catalyses the reaction 3-dehydro-L-gulonate + NADP(+) = 2,3-dioxo-L-gulonate + NADPH + H(+). Catalyzes the reduction of 2,3-diketo-L-gulonate in the presence of NADH, to form 3-keto-L-gulonate. This is 2,3-diketo-L-gulonate reductase from Shigella boydii serotype 4 (strain Sb227).